The chain runs to 93 residues: uncharacterized protein (93 aa).

This is an uncharacterized protein from Methanocaldococcus jannaschii (strain ATCC 43067 / DSM 2661 / JAL-1 / JCM 10045 / NBRC 100440) (Methanococcus jannaschii).